The following is a 154-amino-acid chain: UPF0178 protein BAV3236 (154 aa).

It belongs to the UPF0178 family.

In Bordetella avium (strain 197N), this protein is UPF0178 protein BAV3236.